The sequence spans 337 residues: Glyceraldehyde-3-phosphate dehydrogenase 1 (337 aa).

Residues 11–12, Asp33, and Arg78 contribute to the NAD(+) site; that span reads RI. D-glyceraldehyde 3-phosphate contacts are provided by residues 149–151, Thr180, 209–210, and Arg232; these read SCT and TG. Cys150 serves as the catalytic Nucleophile. Position 318 (Asn318) interacts with NAD(+).

This sequence belongs to the glyceraldehyde-3-phosphate dehydrogenase family. In terms of assembly, homotetramer.

It is found in the cytoplasm. The enzyme catalyses D-glyceraldehyde 3-phosphate + phosphate + NAD(+) = (2R)-3-phospho-glyceroyl phosphate + NADH + H(+). The protein operates within carbohydrate degradation; glycolysis; pyruvate from D-glyceraldehyde 3-phosphate: step 1/5. In Agaricus bisporus (White button mushroom), this protein is Glyceraldehyde-3-phosphate dehydrogenase 1 (gpd1).